Here is a 234-residue protein sequence, read N- to C-terminus: Small ribosomal subunit protein uS3 (234 aa).

The KH type-2 domain maps to 39 to 108 (IRKFVKKKLF…TVIVNVVEVK (70 aa)). The interval 212–234 (KGKNEETNNETADNSRGRRREAK) is disordered.

This sequence belongs to the universal ribosomal protein uS3 family. As to quaternary structure, part of the 30S ribosomal subunit. Forms a tight complex with proteins S10 and S14.

In terms of biological role, binds the lower part of the 30S subunit head. Binds mRNA in the 70S ribosome, positioning it for translation. The chain is Small ribosomal subunit protein uS3 from Alkaliphilus metalliredigens (strain QYMF).